The sequence spans 190 residues: MGFFSSLSSLFGLGKKDVNIVVVGLDNSGKTTILNQLKTPETRSQQIVPTVGHVVTNFSTQNLSFHAFDMAGQMKYRSTWESYFHSSQGVIFVLDSSDRLRMELLKDELMMVMEHKDVVSRGIPIVILANKMDIPGAMTASDITVALGLNLYRSGTWSIHSTCALTGDGLDKAMQQLSAEITKYMESRRT.

Residue Gly-2 is the site of N-myristoyl glycine attachment. GTP is bound by residues 24-31 (GLDNSGKT), 69-73 (DMAGQ), and 130-133 (NKMD).

This sequence belongs to the small GTPase superfamily. Arf family. In terms of tissue distribution, specifically expressed in ciliated cells.

The protein localises to the cytoplasm. This chain is ADP-ribosylation factor-like protein 6, found in Caenorhabditis elegans.